The following is a 367-amino-acid chain: MVPPLPLLLLLLLVPQGGHGCQGSELDREIVLAKVRALFLDALGPPAVTGEGGDPGVRRLPRRHALGGFARRGSEPEEEDVSQAILFPASGSRCEDEPAAGELAQEAEQGLFTYMFRPSQHMRSRQVTSAHLWFHTGLDRQGTAASNSSEPLLGLLALSSGGPMAVPVTLGQAPPCWAVLHLAASALPLLTHPVLVLLLRCPLCSCSARPEATPFLVAHTRARPPSGGERTRRSTPPLPWPWSPAALRLLQRPPEEPAAHANCHRAALNISFQELGWDRWIVHPRSFIFHYCHGGCGLSAPPDLPLPVPEVPPTPIQPLSLVPGAQPCCAALPGTMRPLRVRTTSDGGYSFKYEIVPNLLTQHCACI.

Residues 1–20 (MVPPLPLLLLLLLVPQGGHG) form the signal peptide. A propeptide spanning residues 21–63 (CQGSELDREIVLAKVRALFLDALGPPAVTGEGGDPGVRRLPRR) is cleaved from the precursor. Positions 64 to 233 (HALGGFARRG…PPSGGERTRR (170 aa)) are cleaved as a propeptide — inhibin alpha N-terminal region. Residues N147 and N269 are each glycosylated (N-linked (GlcNAc...) asparagine). 3 disulfide bridges follow: C263–C329, C292–C364, and C296–C366.

The protein belongs to the TGF-beta family. In terms of assembly, dimeric, linked by one or more disulfide bonds. Activin B is a dimer of alpha and beta-B. Inhibin A is a dimer of alpha and beta-A. Inhibin B is a dimer of alpha and beta-B. Interacts with TGFBR3L; this interaction regulates female fertility. Proteolytic processing yields a number of bioactive forms, consisting either solely of the mature alpha chain, of the most N-terminal propeptide linked through a disulfide bond to the mature alpha chain, or of the entire proprotein.

The protein localises to the secreted. Its function is as follows. Inhibins and activins inhibit and activate, respectively, the secretion of follitropin by the pituitary gland. Inhibins/activins are involved in regulating a number of diverse functions such as hypothalamic and pituitary hormone secretion, gonadal hormone secretion, germ cell development and maturation, erythroid differentiation, insulin secretion, nerve cell survival, embryonic axial development or bone growth, depending on their subunit composition. Inhibins appear to oppose the functions of activins. Functionally, inhibin A is a dimer of alpha/INHA and beta-A/INHBA that functions as a feedback regulator in the hypothalamic-pituitary-gonadal (HPG) axis. Inhibits the secretion of FSH from the anterior pituitary gland by acting on pituitary gonadotrope cells. Antagonizes activin A by binding to the proteoglycan, betaglycan, and forming a stable complex with and, thereby, sequestering type II activin receptors while excluding type I receptor. Inhibin B is a dimer of alpha and beta-B that plays a crucial role in the regulation of the reproductive system by inhibiting the secretion of follicle-stimulating hormone (FSH) from the anterior pituitary gland. Thereby, maintains reproductive homeostasis in both males and females. Acts as a more potent suppressor of FSH release than inhibin A. Functions as competitive receptor antagonist binding activin type II receptors with high affinity in the presence of the TGF-beta type III coreceptor/TGFBR3L. This Equus caballus (Horse) protein is Inhibin alpha chain (INHA).